The primary structure comprises 365 residues: Ribosomal RNA large subunit methyltransferase M (365 aa).

Residues Ser-187, 220 to 223 (CPGG), Asp-239, Asp-259, and Asp-276 contribute to the S-adenosyl-L-methionine site. Residue Lys-305 is the Proton acceptor of the active site.

Belongs to the class I-like SAM-binding methyltransferase superfamily. RNA methyltransferase RlmE family. RlmM subfamily. Monomer.

Its subcellular location is the cytoplasm. It catalyses the reaction cytidine(2498) in 23S rRNA + S-adenosyl-L-methionine = 2'-O-methylcytidine(2498) in 23S rRNA + S-adenosyl-L-homocysteine + H(+). Functionally, catalyzes the 2'-O-methylation at nucleotide C2498 in 23S rRNA. This is Ribosomal RNA large subunit methyltransferase M from Psychromonas ingrahamii (strain DSM 17664 / CCUG 51855 / 37).